The primary structure comprises 151 residues: Decarboxylase nsrE (151 aa).

In terms of domain architecture, EthD spans 31-126 (AGMTEEDYHN…VGDHENFADT (96 aa)).

Belongs to the tpcK family.

It carries out the reaction atrochrysone carboxylate + H(+) = atrochrysone + CO2. It functions in the pathway secondary metabolite biosynthesis. Decarboxylase; part of the gene cluster that mediates the biosynthesis of the tetrahydroxanthone dimer neosartorin, which exhibits antibacterial activity. The two different monomeric units appear to be synthesized by the same set of enzymes, among which the Baeyer-Villiger monooxygenase nsrF is the key enzyme for the divergence of the biosynthetic routes. The pathway begins with the synthesis of atrochrysone thioester by the polyketide synthase nsrB. The atrochrysone carboxyl ACP thioesterase nsrC then breaks the thioester bond and releases the atrochrysone carboxylic acid from AacuL. Atrochrysone carboxylic acid is decarboxylated by the decarboxylase nsrE, and oxidized by the anthrone oxygenase nsrD to yield emodin. Emodin is then reduced to emodin hydroquinone by the oxidoreductase nsrR. A-ring reduction by the short chain dehydrogenase nsrJ, dehydration by the scytalone dehydratase-like protein nsrI and probable spontaneous re-oxidation, results in overall deoxygenation to chrysophanol. The Baeyer-Villiger monooxygenase nsrF accepts chrysophanol as a substrate to insert one oxygen atom at two different positions to yield the precursors of both monomric units. NsrF is promiscuous/flexible in interacting with the 2 (non methylated and methylated) aromatic rings of chrysophanol, thus diverging the biosynthetic pathway at this point. After the hydrolysis of the lactones, methylesterification by the methyltransferase nsrG yields respectively moniliphenone and 2,2',6'-trihydroxy-4-methyl-6-methoxya-cyldiphenylmethanone. The next steps are the hydroxylation by the FAD-dependent monooxygenase nsrK, followed by isomerization by the monooxygenase nsrQ. The short chain dehydrogenase/reductase nsrO then catalyzes the C-5 ketoreduction to give the xanthone skeleton of blennolide C and 5-acetylblennolide A. The acetyltransferase nsrL has a strict substrate specificity and uses only blennolide A but not blennolide C to yield 5-acetylblennolide A as the single-acetylated product. In the final step of the biosynthesis, the heterodimerization of the 2 xanthones, blennolide C and 5-acetylblennolide A, is catalyzed by the cytochrome P450 monooxygenase nsrP. NsrP can utilize at least three different xanthones as its substrates to perform the dimerization reaction. This is Decarboxylase nsrE from Aspergillus novofumigatus (strain IBT 16806).